The primary structure comprises 327 residues: Probable protein phosphatase 2C 59 (327 aa).

The signal sequence occupies residues 1–24 (MREVLLLGSLVVLALLSLFPCCSC). In terms of domain architecture, PPM-type phosphatase spans 64–310 (SYGYASSPGK…DNITCLVVRF (247 aa)). Residues aspartate 100, glycine 101, aspartate 262, and aspartate 301 each contribute to the Mn(2+) site.

The protein belongs to the PP2C family. Requires Mg(2+) as cofactor. The cofactor is Mn(2+).

It carries out the reaction O-phospho-L-seryl-[protein] + H2O = L-seryl-[protein] + phosphate. The catalysed reaction is O-phospho-L-threonyl-[protein] + H2O = L-threonyl-[protein] + phosphate. This is Probable protein phosphatase 2C 59 from Oryza sativa subsp. japonica (Rice).